We begin with the raw amino-acid sequence, 462 residues long: MSVAGGSISTAAGNAGKNNALPMAQLADGWLELESDPGLFTLLLEDFGCHDVQVEEVYDLQKPIESPYGFIFLFRWIEERRARRKIVETTAEIFVKDEEAISSIFFAQQVVPNSCATHALLSVLLNCNENNLQLGETLGRLKAHTKGMSPENKGLAIGNTPELACAHNSHAMPQARRRLERTGAGVASCRFTGEAFHFVSFVPINGQLFELDGLKPYPMNHGCWEEHEDWTDKFRRVMAERLGIATGEQDIRFNLMAVVPDRRIAITHKLKMLRTNQAIVSGTLQKLLKADEQGERDEQQRPDTPTTLLEPSAFTARDLQSLLKNLDTEIAINEQHLADENDRRQMFKVDASRRTHNYDKFICTFLSMLAHQGVLGELVSQHLLPSKKIANRLNRQTNAATAAANAANTNVAGTNAAGSKSQQQQQQTQQQPQQTQTAKNGKSPGKTPGRRRKGRNKCRKRK.

The UCH catalytic domain maps to 29-260 (GWLELESDPG…IRFNLMAVVP (232 aa)). C115 acts as the Nucleophile in catalysis. The Proton donor role is filled by H197. The region spanning 357 to 385 (NYDKFICTFLSMLAHQGVLGELVSQHLLP) is the ULD domain. The positively charged C-terminal tail required for binding nucleosomes stretch occupies residues 387-462 (KKIANRLNRQ…KGRNKCRKRK (76 aa)). A compositionally biased stretch (low complexity) spans 413-447 (GTNAAGSKSQQQQQQTQQQPQQTQTAKNGKSPGKT). The disordered stretch occupies residues 413-462 (GTNAAGSKSQQQQQQTQQQPQQTQTAKNGKSPGKTPGRRRKGRNKCRKRK). Residues 448–462 (PGRRRKGRNKCRKRK) are compositionally biased toward basic residues.

The protein belongs to the peptidase C12 family. BAP1 subfamily. Catalytic component of the polycomb repressive deubiquitinase (PR-DUB) complex, at least composed of caly/calypso, Asx and sba (MBD5/6 homolog). The PR-DUB complex associates with nucleosomes to mediate deubiquitination of histone H2AK118ub1 substrates; the association requires the positively charged C-terminal tail of caly, probably due to direct binding of DNA. Interacts (via ULD domain) with Asx (via DEUBAD domain); the interaction produces a stable heterodimer with a composite binding site for ubiquitin. Homodimerizes (via coiled-coil hinge-region between the UCH and ULD domains) to mediate assembly of 2 copies of the caly-Asx heterodimer into a bisymmetric tetramer; dimerization enhances PR-DUB association with nucleosomes.

Its subcellular location is the nucleus. It carries out the reaction Thiol-dependent hydrolysis of ester, thioester, amide, peptide and isopeptide bonds formed by the C-terminal Gly of ubiquitin (a 76-residue protein attached to proteins as an intracellular targeting signal).. In terms of biological role, catalytic component of the polycomb repressive deubiquitinase (PR-DUB) complex, a complex that specifically mediates deubiquitination of histone H2A monoubiquitinated at 'Lys-119' (H2AK118ub1). Mediates bisymmetric organization of the PR-DUB complex and is involved in association with nucleosomes to mediate deubiquitination. Does not deubiquitinate monoubiquitinated histone H2B. Required to maintain the transcriptionally repressive state of homeotic genes throughout development. The PR-DUB complex has weak or no activity toward 'Lys-48'- and 'Lys-63'-linked polyubiquitin chains. Polycomb group (PcG) protein. This Drosophila grimshawi (Hawaiian fruit fly) protein is Ubiquitin carboxyl-terminal hydrolase calypso.